Consider the following 305-residue polypeptide: Short-chain dehydrogenase/reductase VdtF (305 aa).

Leu28 and Asn98 together coordinate NADP(+). Ser192 (proton donor) is an active-site residue. Residues Tyr206, Lys210, and Thr241 each contribute to the NADP(+) site. Tyr206 functions as the Proton acceptor in the catalytic mechanism. Lys210 acts as the Lowers pKa of active site Tyr in catalysis.

The protein belongs to the short-chain dehydrogenases/reductases (SDR) family.

It catalyses the reaction methyl 2-[(3S)-9,10-dihydroxy-7-methoxy-1-oxo-1H,3H,4H-naphtho[2,3-c]pyran-3-yl]acetate + AH2 = semiviriditoxin + A. It carries out the reaction 9,10-dihydroxy-7-methoxy-3-(2-oxopropyl)-1H-benzo[g]isochromen-1-one + AH2 = (3S)-9,10-dihydroxy-7-methoxy-3-(2-oxopropyl)-1H,3H,4H-naphtho[2,3-c]pyran-1-one + A. It participates in secondary metabolite biosynthesis. Short-chain dehydrogenase/reductase; part of the gene cluster that mediates the biosynthesis of viriditoxin, one of the 'classical' secondary metabolites produced by fungi and that has antibacterial activity. The first step is performed by the polyketide synthase VdtA which condenses one acetyl-CoA and 6 malonyl-CoA units to form the heptaketide monomer backbone of viriditoxin. The product of VdtA is then O-methylated on C7 by the O-methyltransferase VdtC. The O-methyl group is important for the stereoselective coupling of the monomers at the final step of viriditoxin biosynthesis. The short-chain dehydrogenase/reductase VdtF then acts as a stereospecific reductase converting the pyrone to dihydropyrone via the reduction of the C3-C4 double bond. The FAD-binding monooxygenase VdtE then converts the ketone group into a methyl-ester group to yield semi-viriditoxin. Finally, the laccase VdtB is involved in dimerization of 2 semi-viriditoxin molecules to yield the final viriditoxin. VdtB is responsible for the regioselective 6,6'-coupling of semi-viriditoxin, which yields (M)-viriditoxin and (P)-viriditoxin at a ratio of 1:2. The non-catalytic carboxylesterase-like protein VdtD affects the stereochemistical outcome of the coupling. The highly reducing polyketide synthase VdtX is not involved in viriditoxin synthesis, but might possibly play a role in the production of additional metabolites not identified yet. The protein is Short-chain dehydrogenase/reductase VdtF of Byssochlamys spectabilis (Paecilomyces variotii).